Consider the following 126-residue polypeptide: Large ribosomal subunit protein bL17 (126 aa).

Belongs to the bacterial ribosomal protein bL17 family. Part of the 50S ribosomal subunit. Contacts protein L32.

The protein is Large ribosomal subunit protein bL17 of Nitrosococcus oceani (strain ATCC 19707 / BCRC 17464 / JCM 30415 / NCIMB 11848 / C-107).